The following is a 510-amino-acid chain: Histidine ammonia-lyase (510 aa).

Positions 143–145 (ASG) form a cross-link, 5-imidazolinone (Ala-Gly). Ser-144 is subject to 2,3-didehydroalanine (Ser).

Belongs to the PAL/histidase family. Post-translationally, contains an active site 4-methylidene-imidazol-5-one (MIO), which is formed autocatalytically by cyclization and dehydration of residues Ala-Ser-Gly.

It localises to the cytoplasm. It catalyses the reaction L-histidine = trans-urocanate + NH4(+). The protein operates within amino-acid degradation; L-histidine degradation into L-glutamate; N-formimidoyl-L-glutamate from L-histidine: step 1/3. The sequence is that of Histidine ammonia-lyase from Shewanella sediminis (strain HAW-EB3).